The sequence spans 89 residues: Bombyxin A-2 (89 aa).

Positions 1–19 are cleaved as a signal peptide; sequence MKILLAIALMLSTVMWVST. Pyrrolidone carboxylic acid is present on Q20. Disulfide bonds link C29–C76, C41–C89, and C75–C80. Residues 50-68 constitute a propeptide, c peptide like; it reads SDAQFASYGSAWLMPYSAG.

This sequence belongs to the insulin family. Heterodimer of a B chain and an A chain linked by two disulfide bonds.

Its subcellular location is the secreted. Functionally, brain peptide responsible for activation of prothoracic glands to produce ecdysone in insects. This chain is Bombyxin A-2 (BBXA2), found in Bombyx mori (Silk moth).